The following is a 102-amino-acid chain: NADH-quinone oxidoreductase subunit K (102 aa).

3 helical membrane passes run 6-26 (MEHGLLLAAALFCIGLCGLLI), 30-50 (LLYILMSIEIMMNASALAFVV), and 65-85 (ILVISLAAAEASIGLALLLLL).

This sequence belongs to the complex I subunit 4L family. In terms of assembly, NDH-1 is composed of 13 different subunits. Subunits NuoA, H, J, K, L, M, N constitute the membrane sector of the complex.

It is found in the cell inner membrane. The catalysed reaction is a quinone + NADH + 5 H(+)(in) = a quinol + NAD(+) + 4 H(+)(out). Functionally, NDH-1 shuttles electrons from NADH, via FMN and iron-sulfur (Fe-S) centers, to quinones in the respiratory chain. The immediate electron acceptor for the enzyme in this species is believed to be ubiquinone. Couples the redox reaction to proton translocation (for every two electrons transferred, four hydrogen ions are translocated across the cytoplasmic membrane), and thus conserves the redox energy in a proton gradient. This is NADH-quinone oxidoreductase subunit K from Shewanella oneidensis (strain ATCC 700550 / JCM 31522 / CIP 106686 / LMG 19005 / NCIMB 14063 / MR-1).